Consider the following 1385-residue polypeptide: Contactin-associated protein 1 (1385 aa).

The first 20 residues, 1–20, serve as a signal peptide directing secretion; that stretch reads MMSLRLFSILLATVVSGAWG. Topologically, residues 21–1284 are extracellular; that stretch reads WGYYGCNEEL…PYYHDDGWIA (1264 aa). The F5/8 type C domain occupies 26–169; it reads CNEELVGPLY…IGLRLGIYGC (144 aa). Cysteines 26 and 169 form a disulfide. Residues Asn-121, Asn-129, and Asn-277 are each glycosylated (N-linked (GlcNAc...) asparagine). Laminin G-like domains lie at 204–356 and 390–539; these read FKTE…AFRC and FRTW…FDTC. Cys-324 and Cys-356 are joined by a disulfide. 3 N-linked (GlcNAc...) asparagine glycosylation sites follow: Asn-421, Asn-500, and Asn-519. Intrachain disulfides connect Cys-507/Cys-539, Cys-545/Cys-556, Cys-550/Cys-565, and Cys-567/Cys-577. The region spanning 545 to 577 is the EGF-like 1 domain; it reads CSPNMCEHDGRCYQSWDDFICYCELTGYKGVTC. The region spanning 577 to 796 is the Fibrinogen C-terminal domain; that stretch reads CHEPLYKESC…NTISFHTGAA (220 aa). Asn-598, Asn-654, Asn-665, Asn-764, Asn-805, Asn-844, Asn-861, Asn-949, and Asn-957 each carry an N-linked (GlcNAc...) asparagine glycan. A Laminin G-like 3 domain is found at 814–958; the sequence is FRTSAPSGVF…NASEGTFPNC (145 aa). Cystine bridges form between Cys-931-Cys-958, Cys-962-Cys-975, Cys-969-Cys-984, and Cys-986-Cys-996. In terms of domain architecture, EGF-like 2 spans 962–996; that stretch reads CTHPRFPCFHGGRCVERYSYYTCDCDLTAFDGPYC. N-linked (GlcNAc...) asparagine glycosylation is found at Asn-1079 and Asn-1148. A Laminin G-like 4 domain is found at 1089–1251; the sequence is FSTNSAPAVL…VQGELSESNC (163 aa). The cysteines at positions 1210 and 1251 are disulfide-linked. The helical transmembrane segment at 1285–1305 threads the bilayer; that stretch reads ILLGFLVAFLLLGLVGMLVLF. Residues 1306–1385 are Cytoplasmic-facing; sequence YLQNHRYKGS…PQILEESRSE (80 aa). Residues 1317–1385 are disordered; it reads HTNEPKATHD…PQILEESRSE (69 aa). Residues 1319 to 1329 show a composition bias toward basic and acidic residues; it reads NEPKATHDSHP. A compositionally biased stretch (pro residues) spans 1334–1367; sequence PLPPSGPAQAPAPTPAPTQLPTPAPAPAPAPASG. Residues 1334–1370 carry the SH3-binding motif; sequence PLPPSGPAQAPAPTPAPTQLPTPAPAPAPAPASGPGP. Ser-1384 is modified (phosphoserine).

Belongs to the neurexin family. In terms of assembly, interacts with CNTN1/contactin in cis form. In terms of tissue distribution, expressed in brain. In myelinated nerve fibers predominantly found in paranodal axoglial junctions. In the internodal region of myelinated axons in the CNS and the PNS also found as a thin line apposing the inner mesaxon of the myelin sheath. In PNS neurons this line forms a circumferential ring that apposes the innermost aspect of Schmidt-Lanterman incisures.

The protein localises to the membrane. It localises to the cell junction. The protein resides in the paranodal septate junction. Functionally, required, with CNTNAP2, for radial and longitudinal organization of myelinated axons. Plays a role in the formation of functional distinct domains critical for saltatory conduction of nerve impulses in myelinated nerve fibers. Demarcates the paranodal region of the axo-glial junction. In association with contactin involved in the signaling between axons and myelinating glial cells. The polypeptide is Contactin-associated protein 1 (Cntnap1) (Mus musculus (Mouse)).